The chain runs to 428 residues: UDP-N-acetylglucosamine 1-carboxyvinyltransferase 2 (428 aa).

A phosphoenolpyruvate-binding site is contributed by lysine 22–asparagine 23. Arginine 92 contacts UDP-N-acetyl-alpha-D-glucosamine. Cysteine 116 (proton donor) is an active-site residue. Cysteine 116 bears the 2-(S-cysteinyl)pyruvic acid O-phosphothioketal mark. Residues arginine 121–glutamine 125, aspartate 304, and isoleucine 326 each bind UDP-N-acetyl-alpha-D-glucosamine.

Belongs to the EPSP synthase family. MurA subfamily.

It localises to the cytoplasm. The enzyme catalyses phosphoenolpyruvate + UDP-N-acetyl-alpha-D-glucosamine = UDP-N-acetyl-3-O-(1-carboxyvinyl)-alpha-D-glucosamine + phosphate. The protein operates within cell wall biogenesis; peptidoglycan biosynthesis. In terms of biological role, cell wall formation. Adds enolpyruvyl to UDP-N-acetylglucosamine. This chain is UDP-N-acetylglucosamine 1-carboxyvinyltransferase 2, found in Oceanobacillus iheyensis (strain DSM 14371 / CIP 107618 / JCM 11309 / KCTC 3954 / HTE831).